The sequence spans 97 residues: Cytochrome c oxidase subunit 4 isoform 1, mitochondrial (97 aa).

The transit peptide at 1-22 (MLATRVFNLIGRRAISTSVCVR) directs the protein to the mitochondrion. Residue Lys-29 is modified to N6-acetyllysine; alternate. Lys-29 carries the N6-succinyllysine; alternate modification. Lys-53 is modified (N6-acetyllysine). Residues Ser-56 and Ser-58 each carry the phosphoserine modification. N6-acetyllysine; alternate is present on Lys-60. The residue at position 60 (Lys-60) is an N6-succinyllysine; alternate. Lys-67 carries the post-translational modification N6-acetyllysine.

The protein belongs to the cytochrome c oxidase IV family. As to quaternary structure, component of the cytochrome c oxidase (complex IV, CIV), a multisubunit enzyme composed of 14 subunits. The complex is composed of a catalytic core of 3 subunits MT-CO1, MT-CO2 and MT-CO3, encoded in the mitochondrial DNA, and 11 supernumerary subunits COX4I, COX5A, COX5B, COX6A, COX6B, COX6C, COX7A, COX7B, COX7C, COX8 and NDUFA4, which are encoded in the nuclear genome. The complex exists as a monomer or a dimer and forms supercomplexes (SCs) in the inner mitochondrial membrane with NADH-ubiquinone oxidoreductase (complex I, CI) and ubiquinol-cytochrome c oxidoreductase (cytochrome b-c1 complex, complex III, CIII), resulting in different assemblies (supercomplex SCI(1)III(2)IV(1) and megacomplex MCI(2)III(2)IV(2)). Interacts with PHB2; the interaction decreases in absence of SPHK2. Interacts with AFG1L. Interacts with ABCB7; this interaction allows the regulation of cellular iron homeostasis and cellular reactive oxygen species (ROS) levels in cardiomyocytes. Interacts with FLVCR2; this interaction occurs in the absence of heme and is disrupted upon heme binding. Interacts with IRGC.

The protein resides in the mitochondrion inner membrane. Its pathway is energy metabolism; oxidative phosphorylation. Functionally, component of the cytochrome c oxidase, the last enzyme in the mitochondrial electron transport chain which drives oxidative phosphorylation. The respiratory chain contains 3 multisubunit complexes succinate dehydrogenase (complex II, CII), ubiquinol-cytochrome c oxidoreductase (cytochrome b-c1 complex, complex III, CIII) and cytochrome c oxidase (complex IV, CIV), that cooperate to transfer electrons derived from NADH and succinate to molecular oxygen, creating an electrochemical gradient over the inner membrane that drives transmembrane transport and the ATP synthase. Cytochrome c oxidase is the component of the respiratory chain that catalyzes the reduction of oxygen to water. Electrons originating from reduced cytochrome c in the intermembrane space (IMS) are transferred via the dinuclear copper A center (CU(A)) of subunit 2 and heme A of subunit 1 to the active site in subunit 1, a binuclear center (BNC) formed by heme A3 and copper B (CU(B)). The BNC reduces molecular oxygen to 2 water molecules using 4 electrons from cytochrome c in the IMS and 4 protons from the mitochondrial matrix. The polypeptide is Cytochrome c oxidase subunit 4 isoform 1, mitochondrial (COX4I1) (Sus scrofa (Pig)).